A 133-amino-acid chain; its full sequence is Small ribosomal subunit protein uS11 (133 aa).

The protein belongs to the universal ribosomal protein uS11 family. In terms of assembly, part of the 30S ribosomal subunit. Interacts with proteins S7 and S18. Binds to IF-3.

In terms of biological role, located on the platform of the 30S subunit, it bridges several disparate RNA helices of the 16S rRNA. Forms part of the Shine-Dalgarno cleft in the 70S ribosome. The chain is Small ribosomal subunit protein uS11 from Ralstonia nicotianae (strain ATCC BAA-1114 / GMI1000) (Ralstonia solanacearum).